The primary structure comprises 1409 residues: DNA-directed RNA polymerase subunit beta' (1409 aa).

4 residues coordinate Zn(2+): cysteine 70, cysteine 72, cysteine 85, and cysteine 88. Aspartate 458, aspartate 460, and aspartate 462 together coordinate Mg(2+). Zn(2+)-binding residues include cysteine 813, cysteine 887, cysteine 894, and cysteine 897.

The protein belongs to the RNA polymerase beta' chain family. In terms of assembly, the RNAP catalytic core consists of 2 alpha, 1 beta, 1 beta' and 1 omega subunit. When a sigma factor is associated with the core the holoenzyme is formed, which can initiate transcription. Mg(2+) is required as a cofactor. Zn(2+) serves as cofactor.

The catalysed reaction is RNA(n) + a ribonucleoside 5'-triphosphate = RNA(n+1) + diphosphate. Its function is as follows. DNA-dependent RNA polymerase catalyzes the transcription of DNA into RNA using the four ribonucleoside triphosphates as substrates. This Delftia acidovorans (strain DSM 14801 / SPH-1) protein is DNA-directed RNA polymerase subunit beta'.